Consider the following 24-residue polypeptide: Brevinin-1Pa (24 aa).

An intrachain disulfide couples C18 to C24.

Expressed by the skin glands.

The protein localises to the secreted. In terms of biological role, antibacterial activity against Gram-positive bacterium S.aureus and Gram-negative bacterium E.coli. Has activity against C.albicans. The polypeptide is Brevinin-1Pa (Lithobates pipiens (Northern leopard frog)).